A 410-amino-acid polypeptide reads, in one-letter code: Dual-specificity RNA methyltransferase RlmN (410 aa).

A disordered region spans residues 7–26 (VSSENLDGQQQSSSTPASPA). The span at 15 to 26 (QQQSSSTPASPA) shows a compositional bias: low complexity. The active-site Proton acceptor is Glu-120. The 244-residue stretch at 130–373 (TGSRKTLCIS…CTIRQTRGDD (244 aa)) folds into the Radical SAM core domain. An intrachain disulfide couples Cys-137 to Cys-378. [4Fe-4S] cluster contacts are provided by Cys-144, Cys-148, and Cys-151. S-adenosyl-L-methionine contacts are provided by residues 200-201 (GE), Ser-232, 254-256 (SLH), and Asn-335. Cys-378 functions as the S-methylcysteine intermediate in the catalytic mechanism.

Belongs to the radical SAM superfamily. RlmN family. It depends on [4Fe-4S] cluster as a cofactor.

Its subcellular location is the cytoplasm. It carries out the reaction adenosine(2503) in 23S rRNA + 2 reduced [2Fe-2S]-[ferredoxin] + 2 S-adenosyl-L-methionine = 2-methyladenosine(2503) in 23S rRNA + 5'-deoxyadenosine + L-methionine + 2 oxidized [2Fe-2S]-[ferredoxin] + S-adenosyl-L-homocysteine. The catalysed reaction is adenosine(37) in tRNA + 2 reduced [2Fe-2S]-[ferredoxin] + 2 S-adenosyl-L-methionine = 2-methyladenosine(37) in tRNA + 5'-deoxyadenosine + L-methionine + 2 oxidized [2Fe-2S]-[ferredoxin] + S-adenosyl-L-homocysteine. Functionally, specifically methylates position 2 of adenine 2503 in 23S rRNA and position 2 of adenine 37 in tRNAs. m2A2503 modification seems to play a crucial role in the proofreading step occurring at the peptidyl transferase center and thus would serve to optimize ribosomal fidelity. This is Dual-specificity RNA methyltransferase RlmN from Acinetobacter baumannii (strain AB307-0294).